An 865-amino-acid chain; its full sequence is Chitin synthase 3 (865 aa).

Positions 1–59 (MASQYPGHQLDDIPSTNVYRPPPRHEDDEAEHALLHQNSAYQSQYDDPHSRPLTPGQES) are disordered. Basic and acidic residues predominate over residues 23 to 34 (PRHEDDEAEHAL). A compositionally biased stretch (polar residues) spans 36–45 (HQNSAYQSQY). 3 N-linked (GlcNAc...) asparagine glycosylation sites follow: asparagine 64, asparagine 95, and asparagine 538. 3 helical membrane-spanning segments follow: residues 565 to 585 (FFLH…WFSL), 620 to 640 (IINT…FILA), and 650 to 670 (VAYI…IVLS). Asparagine 682 carries N-linked (GlcNAc...) asparagine glycosylation. The next 3 membrane-spanning stretches (helical) occupy residues 707–727 (IVII…FLYM), 735–755 (SFAQ…IYAF), and 837–857 (LVAT…SDSL).

The protein belongs to the chitin synthase family. Class III subfamily.

The protein resides in the cell membrane. The catalysed reaction is [(1-&gt;4)-N-acetyl-beta-D-glucosaminyl](n) + UDP-N-acetyl-alpha-D-glucosamine = [(1-&gt;4)-N-acetyl-beta-D-glucosaminyl](n+1) + UDP + H(+). In terms of biological role, polymerizes chitin, a structural polymer of the cell wall and septum, by transferring the sugar moiety of UDP-GlcNAc to the non-reducing end of the growing chitin polymer. Is not only stable at different pH, but is also able to tolerate a broad temperature range. With CHS2, plays an important role in virulence. This Exophiala dermatitidis (strain ATCC 34100 / CBS 525.76 / NIH/UT8656) (Black yeast) protein is Chitin synthase 3.